A 179-amino-acid polypeptide reads, in one-letter code: Large ribosomal subunit protein uL6 (179 aa).

Belongs to the universal ribosomal protein uL6 family. In terms of assembly, part of the 50S ribosomal subunit.

Functionally, this protein binds to the 23S rRNA, and is important in its secondary structure. It is located near the subunit interface in the base of the L7/L12 stalk, and near the tRNA binding site of the peptidyltransferase center. This chain is Large ribosomal subunit protein uL6, found in Bifidobacterium longum subsp. infantis (strain ATCC 15697 / DSM 20088 / JCM 1222 / NCTC 11817 / S12).